The primary structure comprises 674 residues: Kinesin-like protein KIFC1 (674 aa).

Phosphoserine occurs at positions 28, 33, and 35. The interval 66–96 (TSRPRGPLLSTVSQTQGHTAAQKGPKKTGPR) is disordered. Polar residues predominate over residues 75 to 84 (STVSQTQGHT). The stretch at 146–315 (DLNEELKRYR…QELKGNIRVF (170 aa)) forms a coiled coil. The 354-residue stretch at 311–664 (NIRVFCRVRP…LRFASKVNQC (354 aa)) folds into the Kinesin motor domain. The segment at 327–366 (TPSPGFLVFPPGPAGPSDPPTGLSLSRSDDRRSTLTGAPA) is disordered. Positions 336-345 (PPGPAGPSDP) are enriched in pro residues. Thr-360 carries the post-translational modification Phosphothreonine. 411–418 (GQTGSGKT) is a binding site for ATP.

Belongs to the TRAFAC class myosin-kinesin ATPase superfamily. Kinesin family. NCD subfamily. Binds NUBP1 and NUBP2. Interacts with PPP1R42. In terms of tissue distribution, highly expressed in 14 dpc embryos, spleen and NIH3T3 cells. Also expressed in testis, brain, lung, kidney and cultured astrocytes. Very low levels in skeletal muscle and heart.

It localises to the nucleus. The protein resides in the cytoplasm. The protein localises to the cytoskeleton. It is found in the microtubule organizing center. Its subcellular location is the centrosome. It localises to the spindle. The protein resides in the early endosome. In terms of biological role, minus end-directed microtubule-dependent motor required for bipolar spindle formation. May contribute to movement of early endocytic vesicles. Regulates cilium formation and structure. This is Kinesin-like protein KIFC1 from Mus musculus (Mouse).